A 352-amino-acid polypeptide reads, in one-letter code: Large ribosomal subunit protein uL10 (352 aa).

The span at 286-297 (DDEDALPEELQD) shows a compositional bias: acidic residues. A disordered region spans residues 286-352 (DDEDALPEEL…GAEGLGEMFG (67 aa)). Residues 299–310 (DAPAAPAGGEAD) are compositionally biased toward low complexity. Over residues 324–340 (EADDADDSDDDDDDDDG) the composition is skewed to acidic residues. A compositionally biased stretch (gly residues) spans 343–352 (GAEGLGEMFG).

This sequence belongs to the universal ribosomal protein uL10 family. In terms of assembly, part of the 50S ribosomal subunit. Forms part of the ribosomal stalk which helps the ribosome interact with GTP-bound translation factors. Forms a heptameric L10(L12)2(L12)2(L12)2 complex, where L10 forms an elongated spine to which the L12 dimers bind in a sequential fashion.

Forms part of the ribosomal stalk, playing a central role in the interaction of the ribosome with GTP-bound translation factors. The sequence is that of Large ribosomal subunit protein uL10 from Halobacterium salinarum (strain ATCC 700922 / JCM 11081 / NRC-1) (Halobacterium halobium).